Reading from the N-terminus, the 184-residue chain is MKIIVCITGASGVIYAKRLLEVLKDRAEVNLIISNSAKKIIKEELDIDWKEIKKLATDYYENDDFFSPLASGSNKFDAVVVVPCSMKTLSAIANGYSANLIVRVCDIALKERRKLIIMPREMPFNSIHLENMLKLSNLGAIVMPPIPAFYNKPKNVNDIINFVVGRVLDILGIDNSLFKRWGTV.

Residues 9–11 (GAS), S34, 85–88 (SMKT), and R120 each bind FMN. Y150 and R166 together coordinate dimethylallyl phosphate.

This sequence belongs to the UbiX/PAD1 family.

It catalyses the reaction dimethylallyl phosphate + FMNH2 = prenylated FMNH2 + phosphate. Its function is as follows. Flavin prenyltransferase that catalyzes the synthesis of the prenylated FMN cofactor (prenyl-FMN) for 4-hydroxy-3-polyprenylbenzoic acid decarboxylase UbiD. The prenyltransferase is metal-independent and links a dimethylallyl moiety from dimethylallyl monophosphate (DMAP) to the flavin N5 and C6 atoms of FMN. This Methanocaldococcus jannaschii (strain ATCC 43067 / DSM 2661 / JAL-1 / JCM 10045 / NBRC 100440) (Methanococcus jannaschii) protein is Flavin prenyltransferase UbiX.